The chain runs to 228 residues: Large ribosomal subunit protein bL25 (228 aa).

Positions 1–10 are enriched in polar residues; sequence MNSLDANTRN. Disordered stretches follow at residues 1–20 and 187–228; these read MNSL…VRSL and MKEP…EEKK. Residues 202 to 228 are compositionally biased toward basic and acidic residues; sequence EDGKEAAPAAEGDKKDDGEKKATEEKK.

Belongs to the bacterial ribosomal protein bL25 family. CTC subfamily. In terms of assembly, part of the 50S ribosomal subunit; part of the 5S rRNA/L5/L18/L25 subcomplex. Contacts the 5S rRNA. Binds to the 5S rRNA independently of L5 and L18.

This is one of the proteins that binds to the 5S RNA in the ribosome where it forms part of the central protuberance. This is Large ribosomal subunit protein bL25 from Pelagibacter ubique (strain HTCC1062).